A 156-amino-acid polypeptide reads, in one-letter code: MSRRNTAVKRSISSDPVYNSQLIHMMISHILKEGKKALAYRLMYDAMKRIEKTTQQDPILVVERAVRNATPTIEVKARRMGGSIYQVPLEVKPERGTALALRWILLAARNRTGRDMVAKLSNELMDASNRIGNAVRKRDEMHRMAEANKAFAHIRV.

The protein belongs to the universal ribosomal protein uS7 family. In terms of assembly, part of the 30S ribosomal subunit.

The protein resides in the plastid. It localises to the chloroplast. In terms of biological role, one of the primary rRNA binding proteins, it binds directly to 16S rRNA where it nucleates assembly of the head domain of the 30S subunit. The sequence is that of Small ribosomal subunit protein uS7c (rps7) from Nephroselmis olivacea (Green alga).